The chain runs to 590 residues: Aspartate--tRNA(Asp/Asn) ligase (590 aa).

An L-aspartate-binding site is contributed by glutamate 175. Residues 199–202 form an aspartate region; it reads QQYK. Residues arginine 221 and histidine 450 each coordinate L-aspartate. 221–223 serves as a coordination point for ATP; the sequence is RDE. Residue glutamate 484 coordinates ATP. An L-aspartate-binding site is contributed by arginine 491. Residue 536–539 coordinates ATP; the sequence is GVDR.

This sequence belongs to the class-II aminoacyl-tRNA synthetase family. Type 1 subfamily. As to quaternary structure, homodimer.

It localises to the cytoplasm. The enzyme catalyses tRNA(Asx) + L-aspartate + ATP = L-aspartyl-tRNA(Asx) + AMP + diphosphate. Its function is as follows. Aspartyl-tRNA synthetase with relaxed tRNA specificity since it is able to aspartylate not only its cognate tRNA(Asp) but also tRNA(Asn). Reaction proceeds in two steps: L-aspartate is first activated by ATP to form Asp-AMP and then transferred to the acceptor end of tRNA(Asp/Asn). The polypeptide is Aspartate--tRNA(Asp/Asn) ligase (Rhodopseudomonas palustris (strain BisB5)).